Here is a 187-residue protein sequence, read N- to C-terminus: Bis(5'-nucleosyl)-tetraphosphatase, symmetrical (187 aa).

Residues 18–132 (RYQHTIGVME…IFLADYIEPN (115 aa)) enclose the HD domain. His21 contributes to the ADP binding site. His21, His50, and Asp51 together coordinate Fe cation. Residues 51 to 54 (DYAK), His83, 109 to 110 (HT), Asp127, Arg133, and 170 to 175 (PIYPDT) contribute to the ADP site. Residue Asp127 participates in Fe cation binding.

This sequence belongs to the Ap4A hydrolase YqeK family. In terms of assembly, homodimer.

The enzyme catalyses P(1),P(4)-bis(5'-adenosyl) tetraphosphate + H2O = 2 ADP + 2 H(+). In terms of biological role, hydrolyzes diadenosine 5',5'''-P1,P4-tetraphosphate (Ap4A) to yield ADP. The polypeptide is Bis(5'-nucleosyl)-tetraphosphatase, symmetrical (Halalkalibacterium halodurans (strain ATCC BAA-125 / DSM 18197 / FERM 7344 / JCM 9153 / C-125) (Bacillus halodurans)).